The following is a 494-amino-acid chain: Ribose import ATP-binding protein RbsA (494 aa).

2 ABC transporter domains span residues 3 to 240 (IEMK…VGRS) and 250 to 494 (SQIS…TGGE). 35-42 (GENGAGKS) lines the ATP pocket.

This sequence belongs to the ABC transporter superfamily. Ribose importer (TC 3.A.1.2.1) family. The complex is composed of an ATP-binding protein (RbsA), two transmembrane proteins (RbsC) and a solute-binding protein (RbsB).

The protein resides in the cell membrane. The enzyme catalyses D-ribose(out) + ATP + H2O = D-ribose(in) + ADP + phosphate + H(+). Part of the ABC transporter complex RbsABC involved in ribose import. Responsible for energy coupling to the transport system. The polypeptide is Ribose import ATP-binding protein RbsA (Bacillus cereus (strain ZK / E33L)).